The sequence spans 1215 residues: MVDVNKFESMQIGLASPDKIRSWSYGEVKKPETINYRTLKPEKDGLFDERIFGPTKDWECACGKYKRIRYKGVVCDRCGVEVTRSKVRRERMGHIELAAPVTHIWYFKGIPSRMGLVLDMSPRALEEIIYFASYVVLDPGNTPLEKKQLLSERDYRDKLLEYGSDAFKAEMGAEAIKKLLMSVDLDKEVTELKEELKEATGQKRTRAVRRLDILEAFVMSGNRPEWMVMDAIPVIPPDLRPMVQLEGGRFATSDLNDLYRRVINRNSRLKRLLDLNAPGIIVQNEKRMLQEAVDALIDNGRRGRPVAGPGNRPLKSLSHMLKGKQGRFRQNLLGKRVDYSGRSVIDVGPSLKFNQMGLPVPMALELFRPFIMKELVARGLASNIKNAKRQIDREDDDVFNVLEDVIKEHPVLLNRAPTLHRLGIQAFEPVLVSGKAMRLHPLACEAYNADFDGDQMAIHVPLSDEAQAEARLLMLAAHHILAPASGKPVVAPSQDMVIGNYYLTMEEANREGEGMIFTDLDEATLAYRNGIVHWHTRVGVQVTSMPDKPFTDEQRSKIMVTTVGKLIFNNILPKSFPYLNEPTSTNLNGYVPDKYFLEPGEDIHDYLQNAEIIPPFKKGFLSDIIAAVYQQYKVTATSELLDRIKDLGYNESTKSGLTVGMVDVTDLKEKPEIIAAAHKQVSTVTKQFRRGLITDHERYERVIGIWNDAKDEIQNALIHSFDQQNPIFMMSDSGARGNISNFTQLAGMRGLMAAPSGDIMELPITSNFREGLTVMEMFISTHGARKGMTDTALKTANSGYLTRRLVDVAQDVIIREKDCGTDRGLKIRAITDGNEMIEPLYDRILGRYTQKTVYDPQTGDVIVPKNQMIVEDTAQQIVDAGVEEVTIRSAFTCNTEHGVCEHCYGRNMATGDEVEVGEAVGTVAAQSIGEPGTQLTMRNFHTGGVAGNEDITQGLPRVQELFESRNPKGKAEITEVTGTVESIEENPAERTKEITIKGEADTRSYTLPITARMRVSEGDFIHRGGALNYGSVDPKELLRVRDVLSTETYILGEVQRVYRMQGVAISDKHVEIMVRQMLRKVRIMDPGDTDVLPGTLMDIQDFRRANYQTLIDGGIAATARPVILGITKAALETNSFLSAASFQETTRVLTDAAIRGKNDPLVGLKENVIIGKIIPAGTGMPDYRQIKPKEVGGTSTEGVYSISDLEKQMQEDSQA.

Residues cysteine 60, cysteine 62, cysteine 75, and cysteine 78 each coordinate Zn(2+). Aspartate 450, aspartate 452, and aspartate 454 together coordinate Mg(2+). Cysteine 819, cysteine 893, cysteine 900, and cysteine 903 together coordinate Zn(2+).

Belongs to the RNA polymerase beta' chain family. In terms of assembly, the RNAP catalytic core consists of 2 alpha, 1 beta, 1 beta' and 1 omega subunit. When a sigma factor is associated with the core the holoenzyme is formed, which can initiate transcription. Mg(2+) serves as cofactor. Requires Zn(2+) as cofactor.

The enzyme catalyses RNA(n) + a ribonucleoside 5'-triphosphate = RNA(n+1) + diphosphate. Its function is as follows. DNA-dependent RNA polymerase catalyzes the transcription of DNA into RNA using the four ribonucleoside triphosphates as substrates. This chain is DNA-directed RNA polymerase subunit beta', found in Levilactobacillus brevis (strain ATCC 367 / BCRC 12310 / CIP 105137 / JCM 1170 / LMG 11437 / NCIMB 947 / NCTC 947) (Lactobacillus brevis).